Consider the following 1085-residue polypeptide: MDNTDEPQKKVFKARKTMRASDRQQLEAVYKAKEDLLKTTEVKLLNGKHENGDSDLNSPLSNTDCTEDKREVNGLVDSNEISEIKRPESRAESVVSDLEPKPLSPVNVTREQDTDVALVCEAENRVLGSNKVNFHEENNIKNRLDQRESDTPSGENKSNCDNSFSPEEKGKTNDITIISNSPVEEKKKAGEIIVEDTVGEEAISSSMETDQEPKNERDGTAGLSETVVEKAVDESSESILENTDSMEADEIIPILEKLAPAEDEMSCFSKSALLPVDDTAPDLEEKMDNCLSSPLKQESNESLPKEAFLVLSDEEDPCDEREHAEVILPNKSGLPEEVEKSEEEDKEREVVHKEEEKHTERGEVSRRKRSKSEDMDSVHSKRRRFVGEEDYEAEFQVKITARRDVDQKLEKVIQRVLEEKLAALQCAVFDKTLADLKMRIEKVECNKRHKTVLTELQAKITRLTKRFGAAKEDMKKKQENTPNPSLSSGKAASSTANANNLTYRNITTVRQMLESKRNVGDSKPATLQAPVSAAPASSLAAPQTPASGHPKPQTPVTSSPLTTTVISTANTATVVGTSQVPSGSTQPMSVSLQSLPVILHVPVAVSSQPQLLQGHAGTLVTNQQSGSVEFISVQSSSTVGSLTKTAVSLASTNTTKPNNSPSVSSPGVQRNSPASAGSVRTTLAVQAVSTTHPVAQTTRTSLPTVGTSGLHNSTSSRGPIHMKIPLSAFNSTAPTEPPTITAPRVENQTSRPPTDSSANKRTAEGPTQSVKVTGSDSGGVIDLTLDDEDDVSSQAEAKKQNQTASTAQSIPTQPLSRPLPPLQPNPLQQTGVPTSGPSQTTIHVLPTAPTTVNVTHRPVTQTAAKLPIPRTPTNHQVVYTTIPAPPAQNSVRGAVMPSPSLRPVNPQTGSMTVRMPQTTAYVVNNGLTLGSGAPQLTVHHRPPQVHAEPPRPVHPAPLPEAPQPPRLPPEAANTSLPQKPQLKLARVQSQNGIVLSWSVIEVDRSCASVDSYHLYAYHEDPSATMPSQWKKIGEVKALPLPMACTLTQFVSGSKYYFAVRAKDIYGRFGPFCDPQSTDVISSQSS.

Disordered stretches follow at residues 1-22 (MDNT…RASD), 47-109 (GKHE…VNVT), 127-245 (LGSN…NTDS), 329-381 (PNKS…VHSK), 469-499 (AAKE…ANAN), 517-560 (RNVG…TSSP), 650-843 (ASTN…TTIH), 889-910 (NSVR…QTGS), and 932-975 (GAPQ…ANTS). Residues 54–64 (SDLNSPLSNTD) are compositionally biased toward polar residues. 2 stretches are compositionally biased toward basic and acidic residues: residues 82–91 (SEIKRPESRA) and 133–150 (NFHE…RESD). 2 stretches are compositionally biased toward polar residues: residues 151-165 (TPSG…NSFS) and 173-182 (NDITIISNSP). Composition is skewed to basic and acidic residues over residues 347–379 (EREV…DSVH) and 469–479 (AAKEDMKKKQE). A coiled-coil region spans residues 446–480 (NKRHKTVLTELQAKITRLTKRFGAAKEDMKKKQEN). Low complexity-rich tracts occupy residues 487–499 (SSGK…ANAN), 529–547 (APVS…TPAS), and 651–666 (STNT…VSSP). The span at 667–717 (GVQRNSPASAGSVRTTLAVQAVSTTHPVAQTTRTSLPTVGTSGLHNSTSSR) shows a compositional bias: polar residues. The segment covering 732–743 (TAPTEPPTITAP) has biased composition (low complexity). 3 stretches are compositionally biased toward polar residues: residues 746–775 (ENQT…VTGS), 792–810 (SSQA…AQSI), and 830–843 (TGVP…TTIH). The segment covering 950–968 (PRPVHPAPLPEAPQPPRLP) has biased composition (pro residues). Residues 976–1082 (LPQKPQLKLA…DPQSTDVISS (107 aa)) enclose the Fibronectin type-III domain.

It belongs to the MCAF family.

It localises to the nucleus. Recruiter that couples transcriptional factors to general transcription apparatus and thereby modulates transcription regulation and chromatin formation. Can both act as an activator or a repressor depending on the context. Mediates MBD1-dependent transcriptional repression, probably by recruiting complexes containing histone methyltransferase activity. May belong to a complex that represses transcription and couples DNA methylation and histone H3 'Lys-9' trimethylation (H3K9me3). The sequence is that of Activating transcription factor 7-interacting protein 1 (ATF7IP) from Gallus gallus (Chicken).